The following is a 353-amino-acid chain: DNA integrity scanning protein DisA (353 aa).

The region spanning 6-144 (DKELMNILKI…GGIKYVLRDS (139 aa)) is the DAC domain. ATP contacts are provided by residues Gly73, Leu91, and 104–108 (TRHRT).

It belongs to the DisA family. In terms of assembly, homooctamer. Requires Mg(2+) as cofactor.

It carries out the reaction 2 ATP = 3',3'-c-di-AMP + 2 diphosphate. Its function is as follows. Participates in a DNA-damage check-point that is active prior to asymmetric division when DNA is damaged. DisA forms globular foci that rapidly scan along the chromosomes during sporulation, searching for lesions. When a lesion is present, DisA pauses at the lesion site. This triggers a cellular response that culminates in a temporary block in sporulation initiation. In terms of biological role, also has diadenylate cyclase activity, catalyzing the condensation of 2 ATP molecules into cyclic di-AMP (c-di-AMP). c-di-AMP acts as a signaling molecule that couples DNA integrity with progression of sporulation. The rise in c-di-AMP level generated by DisA while scanning the chromosome, operates as a positive signal that advances sporulation; upon encountering a lesion, the DisA focus arrests at the damaged site and halts c-di-AMP synthesis. This Clostridium botulinum (strain Okra / Type B1) protein is DNA integrity scanning protein DisA.